The following is a 528-amino-acid chain: Peptide chain release factor 3 (528 aa).

Residues 11 to 279 form the tr-type G domain; the sequence is SDRRTFAIIS…GFVEWAPAPI (269 aa). Residues 20-27, 88-92, and 142-145 each bind GTP; these read SHPDAGKT, DTPGH, and NKMD.

The protein belongs to the TRAFAC class translation factor GTPase superfamily. Classic translation factor GTPase family. PrfC subfamily.

Its subcellular location is the cytoplasm. Increases the formation of ribosomal termination complexes and stimulates activities of RF-1 and RF-2. It binds guanine nucleotides and has strong preference for UGA stop codons. It may interact directly with the ribosome. The stimulation of RF-1 and RF-2 is significantly reduced by GTP and GDP, but not by GMP. The protein is Peptide chain release factor 3 of Marinomonas sp. (strain MWYL1).